Reading from the N-terminus, the 414-residue chain is Imidazolonepropionase (414 aa).

His-95 and His-97 together coordinate Fe(3+). The Zn(2+) site is built by His-95 and His-97. Residues Arg-104, Tyr-162, and His-189 each contribute to the 4-imidazolone-5-propanoate site. Tyr-162 is a binding site for N-formimidoyl-L-glutamate. His-252 contributes to the Fe(3+) binding site. His-252 provides a ligand contact to Zn(2+). Gln-255 is a 4-imidazolone-5-propanoate binding site. Asp-326 contacts Fe(3+). A Zn(2+)-binding site is contributed by Asp-326. 2 residues coordinate N-formimidoyl-L-glutamate: Asn-328 and Gly-330. A 4-imidazolone-5-propanoate-binding site is contributed by Ser-331.

Belongs to the metallo-dependent hydrolases superfamily. HutI family. The cofactor is Zn(2+). Fe(3+) is required as a cofactor.

It localises to the cytoplasm. The catalysed reaction is 4-imidazolone-5-propanoate + H2O = N-formimidoyl-L-glutamate. The protein operates within amino-acid degradation; L-histidine degradation into L-glutamate; N-formimidoyl-L-glutamate from L-histidine: step 3/3. Catalyzes the hydrolytic cleavage of the carbon-nitrogen bond in imidazolone-5-propanoate to yield N-formimidoyl-L-glutamate. It is the third step in the universal histidine degradation pathway. The chain is Imidazolonepropionase from Streptomyces avermitilis (strain ATCC 31267 / DSM 46492 / JCM 5070 / NBRC 14893 / NCIMB 12804 / NRRL 8165 / MA-4680).